Consider the following 99-residue polypeptide: Large ribosomal subunit protein bL27 (99 aa).

Residues 1-9 (MLIMNLQLF) constitute a propeptide that is removed on maturation.

Belongs to the bacterial ribosomal protein bL27 family. Post-translationally, the N-terminus is cleaved by ribosomal processing cysteine protease Prp.

This chain is Large ribosomal subunit protein bL27, found in Clostridium botulinum (strain Eklund 17B / Type B).